Here is a 367-residue protein sequence, read N- to C-terminus: Alanine racemase (367 aa).

The active-site Proton acceptor; specific for D-alanine is the lysine 34. Lysine 34 bears the N6-(pyridoxal phosphate)lysine mark. Residue arginine 129 participates in substrate binding. Tyrosine 251 functions as the Proton acceptor; specific for L-alanine in the catalytic mechanism. Methionine 299 serves as a coordination point for substrate.

Belongs to the alanine racemase family. Requires pyridoxal 5'-phosphate as cofactor.

It carries out the reaction L-alanine = D-alanine. It functions in the pathway amino-acid biosynthesis; D-alanine biosynthesis; D-alanine from L-alanine: step 1/1. In terms of biological role, catalyzes the interconversion of L-alanine and D-alanine. May also act on other amino acids. In Thiobacillus denitrificans (strain ATCC 25259 / T1), this protein is Alanine racemase (alr).